The following is a 73-amino-acid chain: Putative membrane protein insertion efficiency factor (73 aa).

Belongs to the UPF0161 family.

The protein resides in the cell inner membrane. In terms of biological role, could be involved in insertion of integral membrane proteins into the membrane. This is Putative membrane protein insertion efficiency factor from Jannaschia sp. (strain CCS1).